A 488-amino-acid polypeptide reads, in one-letter code: Fumarate hydratase, mitochondrial (488 aa).

Residues 1-24 (MLRFTNCSCKTFVKSSYKLNIRRM) constitute a mitochondrion transit peptide. Substrate-binding positions include 124–126 (SGT), 154–157 (HPNN), 164–166 (SSN), and Thr-212. Catalysis depends on His-213, which acts as the Proton donor/acceptor. Residue Ser-343 is part of the active site. Residues Ser-344 and 349-351 (KVN) contribute to the substrate site. A Phosphothreonine modification is found at Thr-428.

The protein belongs to the class-II fumarase/aspartase family. Fumarase subfamily. As to quaternary structure, homotetramer.

The protein localises to the mitochondrion matrix. It is found in the cytoplasm. The protein resides in the nucleus. It carries out the reaction (S)-malate = fumarate + H2O. Its pathway is carbohydrate metabolism; tricarboxylic acid cycle; (S)-malate from fumarate: step 1/1. Functionally, catalyzes the reversible stereospecific interconversion of fumarate to L-malate. In mitochondrion, catalyzes the hydration of fumarate to L-malate in the tricarboxylic acid (TCA) cycle to facilitate a transition step in the production of energy in the form of NADH. In cytoplasm and nucleus, involved in DNA repair in response to DNA damage: following DNA double-strand breaks (DSBs), translocates from the cytosol to the nucleus and promotes DNA repair by catalyzing the dehydration of L-malate to fumarate. This is Fumarate hydratase, mitochondrial from Saccharomyces cerevisiae (strain ATCC 204508 / S288c) (Baker's yeast).